Here is a 678-residue protein sequence, read N- to C-terminus: uncharacterized protein (678 aa).

2 consecutive transmembrane segments (helical) span residues 14 to 34 and 180 to 200; these read LMFA…WTGL and GAVI…IGGF.

It belongs to the mycobacterial PPE family.

It localises to the cell membrane. This is an uncharacterized protein from Mycobacterium tuberculosis (strain CDC 1551 / Oshkosh).